Consider the following 324-residue polypeptide: NADH-ubiquinone oxidoreductase chain 1 (324 aa).

8 helical membrane-spanning segments follow: residues leucine 9–valine 29, isoleucine 75–methionine 95, leucine 106–glycine 126, isoleucine 146–tyrosine 166, threonine 178–glutamate 198, glutamate 212–alanine 232, glutamate 259–methionine 279, and phenylalanine 299–glycine 319.

This sequence belongs to the complex I subunit 1 family. In terms of assembly, core subunit of respiratory chain NADH dehydrogenase (Complex I) which is composed of 45 different subunits.

The protein localises to the mitochondrion inner membrane. It catalyses the reaction a ubiquinone + NADH + 5 H(+)(in) = a ubiquinol + NAD(+) + 4 H(+)(out). Functionally, core subunit of the mitochondrial membrane respiratory chain NADH dehydrogenase (Complex I) which catalyzes electron transfer from NADH through the respiratory chain, using ubiquinone as an electron acceptor. Essential for the catalytic activity and assembly of complex I. This Danio rerio (Zebrafish) protein is NADH-ubiquinone oxidoreductase chain 1 (mt-nd1).